Reading from the N-terminus, the 327-residue chain is MDAKMGYIFKVMRWIFCFVACGITFGCTNSGFQNANSRPCILSMNRMIHDCVERVVGNRLATAVLIKGSLDPHAYEMVKGDKDKIAGSAVIFCNGLGLEHTLSLRKHLENNPNSVKLGERLIARGAFVPLEEDGICDPHIWMDLSIWKEAVIEITEVLIEKFPEWSAEFKANSEELVCEMSILDSWAKQCLSTIPENLRYLVSGHNAFSYFTRRYLATPEEVASGAWRSRCISPEGLSPEAQISVRDIMAVVDYINEHDVSVVFPEDTLNQDALKKIVSSLKKSHLVRLAQKPLYSDNVDDNYFSTFKHNVCLITEELGGVALECQR.

Residues 1–20 (MDAKMGYIFKVMRWIFCFVA) form the signal peptide. Fe(2+)-binding residues include His-73, His-139, His-205, and Asp-297.

The protein belongs to the bacterial solute-binding protein 9 family. In terms of assembly, monomer.

It localises to the periplasm. Functionally, part of the ATP-binding cassette (ABC) transport system YtgABCD involved in metal import. Binds Fe(2+), Mn(2+) and Ni(2+), with a preference for Fe(2+) and delivers them to the membrane permease for translocation into the cytoplasm. The sequence is that of Metal-binding protein YtgA from Chlamydia pneumoniae (Chlamydophila pneumoniae).